The following is a 269-amino-acid chain: RBPJ-interacting and tubulin-associated protein 1 (269 aa).

Residues 5–17 (VELAVSGMQTLGL) carry the Nuclear export signal motif. Disordered regions lie at residues 66 to 105 (VGKE…PISH) and 141 to 269 (LWTP…PPWK). Residues 80–92 (CETTPSRGSTPTL) show a composition bias toward polar residues. Residues 92–108 (LTPRKKNKYRPISHTPS) carry the Nuclear localization signal motif. The interaction with RBPJ/RBPSUH stretch occupies residues 128–156 (RMAKGDAAKLRALLWTPPPTPRGSHSPRP). Positions 156–269 (PREAPLRAIH…ATQKPKPPWK (114 aa)) are interaction with tubulin. Polar residues predominate over residues 200–253 (HSLTHLNVPSTGHPATSAPHTNGPQDLRPSTSGVTFRSPLVTSRARSVSISVPS).

The protein belongs to the RITA family. In terms of assembly, interacts with RBPJ/RBPSUH.

The protein localises to the cytoplasm. It is found in the nucleus. It localises to the cytoskeleton. Its subcellular location is the microtubule organizing center. The protein resides in the centrosome. Tubulin-binding protein that acts as a negative regulator of Notch signaling pathway. Shuttles between the cytoplasm and the nucleus and mediates the nuclear export of RBPJ/RBPSUH, thereby preventing the interaction between RBPJ/RBPSUH and NICD product of Notch proteins (Notch intracellular domain), leading to down-regulate Notch-mediated transcription. May play a role in neurogenesis. This is RBPJ-interacting and tubulin-associated protein 1 (RITA1) from Homo sapiens (Human).